The sequence spans 659 residues: PAN2-PAN3 deadenylation complex subunit PAN3 (659 aa).

Disordered regions lie at residues 1–26 and 103–132; these read MASA…AREN and PKAA…QENI. The C3H1-type zinc-finger motif lies at 26–55; the sequence is NAKDTLCRNVTIYGRCRYEDKGCAFNHDPL. Residues 115 to 132 show a composition bias toward polar residues; sequence SVASRSNTSTPNSRQENI. Residues 262–522 form a pseudokinase domain region; that stretch reads QTLPNTQLPA…NIDIFITGIS (261 aa). ATP-binding positions include arginine 314, 363–370, and 422–423; these read DYYPLSKT and SK. The stretch at 523–561 forms a coiled coil; sequence SQLMSTFDSALHLDDQLTSDLSRELENGRLVRLMTKLNL. Residues 562–659 are knob domain; the sequence is VNERPEYEHD…ALLKPARRMH (98 aa).

Belongs to the protein kinase superfamily. PAN3 family. Homodimer. Forms a heterotrimer with a catalytic subunit pan2 to form the poly(A)-nuclease (PAN) deadenylation complex. Interacts (via PAM-2 motif) with poly(A)-binding protein pab1 (via PABC domain), conferring substrate specificity of the enzyme complex.

It localises to the cytoplasm. Functionally, regulatory subunit of the poly(A)-nuclease (PAN) deadenylation complex, one of two cytoplasmic mRNA deadenylases involved in mRNA turnover. PAN specifically shortens poly(A) tails of RNA and the activity is stimulated by poly(A)-binding protein pab1. PAN deadenylation is followed by rapid degradation of the shortened mRNA tails by the CCR4-NOT complex. Deadenylated mRNAs are then degraded by two alternative mechanisms, namely exosome-mediated 3'-5' exonucleolytic degradation, or deadenylation-dependent mRNA decaping and subsequent 5'-3' exonucleolytic degradation by xrn1. May also be involved in post-transcriptional maturation of mRNA poly(A) tails. pan3 acts as a positive regulator for PAN activity, recruiting the catalytic subunit pan2 to mRNA via its interaction with RNA and with pab1. The protein is PAN2-PAN3 deadenylation complex subunit PAN3 of Aspergillus clavatus (strain ATCC 1007 / CBS 513.65 / DSM 816 / NCTC 3887 / NRRL 1 / QM 1276 / 107).